We begin with the raw amino-acid sequence, 133 residues long: Small ribosomal subunit protein eS8 (133 aa).

A disordered region spans residues 1–31 (MGFYQGPDNRKITGGLKGKHRDKRKYEIGNP).

Belongs to the eukaryotic ribosomal protein eS8 family. Part of the 30S ribosomal subunit.

The chain is Small ribosomal subunit protein eS8 from Saccharolobus solfataricus (strain ATCC 35092 / DSM 1617 / JCM 11322 / P2) (Sulfolobus solfataricus).